The chain runs to 74 residues: Exodeoxyribonuclease 7 small subunit (74 aa).

It belongs to the XseB family. In terms of assembly, heterooligomer composed of large and small subunits.

Its subcellular location is the cytoplasm. The catalysed reaction is Exonucleolytic cleavage in either 5'- to 3'- or 3'- to 5'-direction to yield nucleoside 5'-phosphates.. Functionally, bidirectionally degrades single-stranded DNA into large acid-insoluble oligonucleotides, which are then degraded further into small acid-soluble oligonucleotides. The chain is Exodeoxyribonuclease 7 small subunit from Haemophilus ducreyi (strain 35000HP / ATCC 700724).